Here is a 1173-residue protein sequence, read N- to C-terminus: Paired amphipathic helix protein Sin3-like 6 (1173 aa).

The segment at 40-75 (NQSAGESGRRLKMKRAREDVHTDTQKRKPEVSSRGE) is disordered. The segment covering 55–75 (AREDVHTDTQKRKPEVSSRGE) has biased composition (basic and acidic residues). PAH domains lie at 79–148 (LPRT…LPKG) and 162–232 (IRVD…LPNC). Disordered stretches follow at residues 236–337 (APST…TTKY), 655–697 (TASG…TAQP), and 740–813 (KHEL…ENNK). 2 stretches are compositionally biased toward basic and acidic residues: residues 264 to 276 (CKLE…SDQR) and 301 to 319 (RDYE…RTEK). Polar residues predominate over residues 320–337 (SAASGSQDIGNHKSTTKY). The span at 750-765 (PTASREQSNFEVNGQN) shows a compositional bias: polar residues. A compositionally biased stretch (basic and acidic residues) spans 778 to 810 (RSNKDKQSCDKKGAKNKTRAEDDKQENCHKLSE).

The protein localises to the nucleus. Its function is as follows. Acts as a transcriptional repressor. Plays roles in regulating gene expression and genome stability. The sequence is that of Paired amphipathic helix protein Sin3-like 6 (SNL6) from Arabidopsis thaliana (Mouse-ear cress).